A 410-amino-acid polypeptide reads, in one-letter code: Mating-type locus allele B7 protein (410 aa).

The tract at residues methionine 1–cysteine 110 is variable domain between B alleles. A DNA-binding region (homeobox; TALE-type) is located at residues alanine 107–histidine 184. Residues arginine 111–valine 410 are highly conserved between B alleles. 3 disordered regions span residues arginine 202–leucine 225, threonine 278–serine 336, and alanine 374–glutamate 394. The Nuclear localization signal motif lies at lysine 276 to arginine 308. Residues asparagine 306–serine 336 show a composition bias toward polar residues. Residues proline 333–valine 410 are not essential for B7 function. The segment covering arginine 375–glycine 388 has biased composition (basic residues).

It belongs to the TALE/M-ATYP homeobox family.

It is found in the nucleus. Functionally, the B locus has at least 25 alleles, and any combination of two different B alleles yields a multimeric regulatory protein, that activates genes responsible for the pathogenicity and for the sexual development of the fungus within the corn plant. The sequence is that of Mating-type locus allele B7 protein from Mycosarcoma maydis (Corn smut fungus).